A 220-amino-acid chain; its full sequence is MAGMRLILVGPPGAGKGTQAPNIQKKYGIAHLATGDMLRSQVARQTELGKEAKKIMDQGGLVSDDIVTGMIKDEILNNPECKNGFILDGFPRTVVQAEKLTALLDELKLDLNTVLELQVDDELLVRRITGRLVHPGSGRSYHLEFNPPKVPMKDDVTGEPLIQRSDDNADALRKRLVTYHEQTTPVVEFYKKKGKWAAVDAAQKPEQVWEQIVAILEKAE.

13-18 is a binding site for ATP; that stretch reads GAGKGT. Positions 33-62 are NMP; that stretch reads ATGDMLRSQVARQTELGKEAKKIMDQGGLV. AMP-binding positions include Thr-34, Arg-39, 60–62, 89–92, and Gln-96; these read GLV and GFPR. The interval 130-167 is LID; sequence GRLVHPGSGRSYHLEFNPPKVPMKDDVTGEPLIQRSDD. Residues Arg-131 and 140-141 contribute to the ATP site; that span reads SY. AMP-binding residues include Arg-164 and Arg-175. Position 203 (Gln-203) interacts with ATP.

Belongs to the adenylate kinase family. AK2 subfamily. In terms of assembly, monomer.

The protein localises to the cytoplasm. It localises to the cytosol. It is found in the mitochondrion intermembrane space. The protein resides in the nucleus. It carries out the reaction AMP + ATP = 2 ADP. Functionally, catalyzes the reversible transfer of the terminal phosphate group between ATP and AMP. Plays an important role in cellular energy homeostasis and in adenine nucleotide metabolism. Adenylate kinase activity is critical for regulation of the phosphate utilization and the AMP de novo biosynthesis pathways. This Schizosaccharomyces pombe (strain 972 / ATCC 24843) (Fission yeast) protein is Adenylate kinase (adk1).